The primary structure comprises 568 residues: Urease subunit alpha (568 aa).

The Urease domain occupies 131–568; that stretch reads GGIDTHIHFI…LPMAQRYFLF (438 aa). His136, His138, and Lys219 together coordinate Ni(2+). Residue Lys219 is modified to N6-carboxylysine. His221 contributes to the substrate binding site. 2 residues coordinate Ni(2+): His248 and His274. His322 (proton donor) is an active-site residue. Asp362 contacts Ni(2+).

It belongs to the metallo-dependent hydrolases superfamily. Urease alpha subunit family. As to quaternary structure, heterotrimer of UreA (gamma), UreB (beta) and UreC (alpha) subunits. Three heterotrimers associate to form the active enzyme. Ni cation is required as a cofactor. Post-translationally, carboxylation allows a single lysine to coordinate two nickel ions.

Its subcellular location is the cytoplasm. The catalysed reaction is urea + 2 H2O + H(+) = hydrogencarbonate + 2 NH4(+). It participates in nitrogen metabolism; urea degradation; CO(2) and NH(3) from urea (urease route): step 1/1. The polypeptide is Urease subunit alpha (Trichormus variabilis (strain ATCC 29413 / PCC 7937) (Anabaena variabilis)).